The chain runs to 239 residues: 1-(5-phosphoribosyl)-5-[(5-phosphoribosylamino)methylideneamino] imidazole-4-carboxamide isomerase (239 aa).

D8 functions as the Proton acceptor in the catalytic mechanism. D129 functions as the Proton donor in the catalytic mechanism.

This sequence belongs to the HisA/HisF family.

Its subcellular location is the cytoplasm. It catalyses the reaction 1-(5-phospho-beta-D-ribosyl)-5-[(5-phospho-beta-D-ribosylamino)methylideneamino]imidazole-4-carboxamide = 5-[(5-phospho-1-deoxy-D-ribulos-1-ylimino)methylamino]-1-(5-phospho-beta-D-ribosyl)imidazole-4-carboxamide. It participates in amino-acid biosynthesis; L-histidine biosynthesis; L-histidine from 5-phospho-alpha-D-ribose 1-diphosphate: step 4/9. This is 1-(5-phosphoribosyl)-5-[(5-phosphoribosylamino)methylideneamino] imidazole-4-carboxamide isomerase from Bacillus cereus (strain AH187).